A 106-amino-acid polypeptide reads, in one-letter code: Trp operon repressor homolog (106 aa).

The DNA-binding element occupies 59–82 (QREIQQILNTSAATITRGSNMIKI).

The protein belongs to the TrpR family. Homodimer.

The protein resides in the cytoplasm. This protein is an aporepressor. When complexed with L-tryptophan it binds the operator region of the trp operon and prevents the initiation of transcription. The sequence is that of Trp operon repressor homolog from Histophilus somni (strain 2336) (Haemophilus somnus).